We begin with the raw amino-acid sequence, 258 residues long: MSDLKAAALRALKLMDLTTLNDNDTDEAVIALCKNAKTAVGNTAAVCIYPRFVPIAKKTLREQGTPDVRIATVTNFPHGNDDIAIAVAETKAAVAYGADEVDVVFPYRALIAGNETVGFELVKQCKEACGDILLKVIIETGELKEEALIKKTSQICIEAGANFIKTSTGKVPVNATPEYARMMLEVIRDMGVAKTVGFKPAGGVRTAEDAQAYLAMADDILGGDWADNMHYRFGASSLLTNLLNTLEVTAETADPSAY.

The active-site Proton donor/acceptor is the Asp-102. Lys-165 (schiff-base intermediate with acetaldehyde) is an active-site residue. The active-site Proton donor/acceptor is the Lys-199.

Belongs to the DeoC/FbaB aldolase family. DeoC type 2 subfamily.

The protein resides in the cytoplasm. It carries out the reaction 2-deoxy-D-ribose 5-phosphate = D-glyceraldehyde 3-phosphate + acetaldehyde. Its pathway is carbohydrate degradation; 2-deoxy-D-ribose 1-phosphate degradation; D-glyceraldehyde 3-phosphate and acetaldehyde from 2-deoxy-alpha-D-ribose 1-phosphate: step 2/2. Its function is as follows. Catalyzes a reversible aldol reaction between acetaldehyde and D-glyceraldehyde 3-phosphate to generate 2-deoxy-D-ribose 5-phosphate. The polypeptide is Deoxyribose-phosphate aldolase (Aliivibrio salmonicida (strain LFI1238) (Vibrio salmonicida (strain LFI1238))).